The sequence spans 97 residues: Large ribosomal subunit protein bL28 (97 aa).

Belongs to the bacterial ribosomal protein bL28 family.

The protein is Large ribosomal subunit protein bL28 of Sphingopyxis alaskensis (strain DSM 13593 / LMG 18877 / RB2256) (Sphingomonas alaskensis).